The chain runs to 123 residues: Small ribosomal subunit protein uS12 (123 aa).

A 3-methylthioaspartic acid modification is found at Asp-89. The disordered stretch occupies residues Leu-102–Lys-123. Basic residues predominate over residues Arg-111–Lys-123.

This sequence belongs to the universal ribosomal protein uS12 family. In terms of assembly, part of the 30S ribosomal subunit. Contacts proteins S8 and S17. May interact with IF1 in the 30S initiation complex.

Functionally, with S4 and S5 plays an important role in translational accuracy. In terms of biological role, interacts with and stabilizes bases of the 16S rRNA that are involved in tRNA selection in the A site and with the mRNA backbone. Located at the interface of the 30S and 50S subunits, it traverses the body of the 30S subunit contacting proteins on the other side and probably holding the rRNA structure together. The combined cluster of proteins S8, S12 and S17 appears to hold together the shoulder and platform of the 30S subunit. This chain is Small ribosomal subunit protein uS12, found in Lawsonia intracellularis (strain PHE/MN1-00).